Consider the following 265-residue polypeptide: Undecaprenyl-diphosphatase (265 aa).

Helical transmembrane passes span 14-34 (GLGE…PWLF), 40-60 (SLVF…VYFW), 79-99 (GKLF…GYLF), 112-132 (LLIA…DSIA), 141-161 (MNVF…FPGI), 182-202 (AKFS…VSLL), 217-237 (IGFF…LGIV), and 242-262 (FKIF…FYLL).

Belongs to the UppP family.

It localises to the cell membrane. The enzyme catalyses di-trans,octa-cis-undecaprenyl diphosphate + H2O = di-trans,octa-cis-undecaprenyl phosphate + phosphate + H(+). Its function is as follows. Catalyzes the dephosphorylation of undecaprenyl diphosphate (UPP). Confers resistance to bacitracin. The protein is Undecaprenyl-diphosphatase of Caldicellulosiruptor bescii (strain ATCC BAA-1888 / DSM 6725 / KCTC 15123 / Z-1320) (Anaerocellum thermophilum).